Consider the following 75-residue polypeptide: Accessory gland-specific peptide 57Da (75 aa).

Residues 1–19 form the signal peptide; that stretch reads MKFLALFVTLLVVLALVSA. Positions 55-75 are disordered; it reads AAPAAAPAAPEAGLADAPAES. A compositionally biased stretch (low complexity) spans 56–75; sequence APAAAPAAPEAGLADAPAES.

As to expression, lumen fluid of male accessory glands, becomes seminal fluid.

It localises to the secreted. Functionally, transferred from male to female during mating and may affect egglaying and behavior after mating. This Drosophila melanogaster (Fruit fly) protein is Accessory gland-specific peptide 57Da (Mst57Da).